A 295-amino-acid polypeptide reads, in one-letter code: MYTGRFAPSPTGLLHIGSLLTAVASYADARSNGGKWLVRMEDLDPPREMPGAASHILHTLEAFGFKWDGEVTYQSRRYALYEETLYRLKTAGLVYPCHCNRKDWQAGARRGTDGFVYNGRCRHPGQRPALQGKQPSWRIRVPDRDIGFSDGIVGSYAQNLARDIGDFVLFRADGYWAYQLAVVADDAEQGVTHIVRGQDLLVSTPRQIYLQQCLGVPTPQYAHLPLLTNAQGQKWSKQTLAPALDLNRREQLLRQVFRYLKLPEAPETDRPAELLDWAVAHWDMDKVPKHAITAP.

L-glutamate-binding positions include 5 to 9 (RFAPS) and Glu41. The short motif at 8–18 (PSPTGLLHIGS) is the 'HIGH' region element. Zn(2+) contacts are provided by Cys97, Cys99, Tyr117, and Cys121. L-glutamate contacts are provided by Tyr178 and Arg196. A 'KMSKS' region motif is present at residues 234 to 238 (KWSKQ). ATP is bound at residue Lys237.

This sequence belongs to the class-I aminoacyl-tRNA synthetase family. GluQ subfamily. Zn(2+) serves as cofactor.

Its function is as follows. Catalyzes the tRNA-independent activation of glutamate in presence of ATP and the subsequent transfer of glutamate onto a tRNA(Asp). Glutamate is transferred on the 2-amino-5-(4,5-dihydroxy-2-cyclopenten-1-yl) moiety of the queuosine in the wobble position of the QUC anticodon. The sequence is that of Glutamyl-Q tRNA(Asp) synthetase from Neisseria gonorrhoeae (strain ATCC 700825 / FA 1090).